We begin with the raw amino-acid sequence, 142 residues long: Large ribosomal subunit protein uL11 (142 aa).

This sequence belongs to the universal ribosomal protein uL11 family. As to quaternary structure, part of the ribosomal stalk of the 50S ribosomal subunit. Interacts with L10 and the large rRNA to form the base of the stalk. L10 forms an elongated spine to which L12 dimers bind in a sequential fashion forming a multimeric L10(L12)X complex. In terms of processing, one or more lysine residues are methylated.

In terms of biological role, forms part of the ribosomal stalk which helps the ribosome interact with GTP-bound translation factors. This chain is Large ribosomal subunit protein uL11, found in Parvibaculum lavamentivorans (strain DS-1 / DSM 13023 / NCIMB 13966).